A 43-amino-acid polypeptide reads, in one-letter code: MRPSLYDQIVAILDRHDSCCGFERDDAAEELHALVIELYGPPF.

This Mycobacterium phage L5 (Mycobacteriophage L5) protein is Gene 67 protein (67).